Here is a 684-residue protein sequence, read N- to C-terminus: Extracellular lipase (684 aa).

Residues 1 to 48 form the signal peptide; sequence MKKKLIYAAVVSALLAGCGGSDDNKGDTSSYLDYLLTGSNAVGPSALA. Disordered stretches follow at residues 321 to 405 and 462 to 493; these read SIPV…ADWG and QRER…GDRS. A compositionally biased stretch (basic and acidic residues) spans 385 to 405; sequence ADCRSDPPERAAGRGEQADWG. Ser568 functions as the Nucleophile in the catalytic mechanism.

This sequence belongs to the AB hydrolase superfamily. Lipase family. In terms of assembly, monomer.

It localises to the secreted. The catalysed reaction is a triacylglycerol + H2O = a diacylglycerol + a fatty acid + H(+). Its function is as follows. The optimum chain lengths for the acyl moiety is C6 for ester hydrolysis and C6 and C8 for triacylglycerol hydrolysis. The chain is Extracellular lipase from Aeromonas hydrophila.